The primary structure comprises 227 residues: Nitrobenzene nitroreductase (227 aa).

14 to 18 (RRAKR) is an FMN binding site. NADP(+)-binding residues include Ser44 and Ile109. FMN-binding positions include 172-173 (VF) and Lys215.

Belongs to the nitroreductase family. In terms of assembly, monomer. The cofactor is FMN.

The catalysed reaction is N-phenylhydroxylamine + 2 NADP(+) + H2O = nitrobenzene + 2 NADPH + 2 H(+). It functions in the pathway xenobiotic degradation; nitrobenzene degradation. Its activity is regulated as follows. Inhibited by dicumarol, p-hydroxymercuribenzoate and salicyl hydroxamate. Its function is as follows. Involved in the biodegradation of nitroaromatic compounds. Catalyzes the two-electron reduction of nitrobenzene (NB) to produce a nitrosobenzene (NOB) intermediate, which is immediately reduced to hydroxylaminobenzene (HAB) by a second two-electron transfer. Also active on menadione and nitrofurazone. Replacing NADPH with NADH results in a 4-fold decrease in the reaction rate. This chain is Nitrobenzene nitroreductase, found in Ectopseudomonas oleovorans (Pseudomonas oleovorans).